A 43-amino-acid chain; its full sequence is Protein PsbN (43 aa).

The chain crosses the membrane as a helical span at residues 5–27; that stretch reads TLVTISISCLLVSFTGYAIYTSF.

The protein belongs to the PsbN family.

The protein localises to the plastid. Its subcellular location is the chloroplast thylakoid membrane. Its function is as follows. May play a role in photosystem I and II biogenesis. This Welwitschia mirabilis (Tree tumbo) protein is Protein PsbN.